The chain runs to 576 residues: Mycobactin import ATP-binding/permease protein IrtB (576 aa).

Residues 1-25 are Cytoplasmic-facing; that stretch reads MIRTLIALVPADKRGTLGLYTVLTV. The 281-residue stretch at 19-299 folds into the ABC transmembrane type-1 domain; the sequence is LYTVLTVLSV…LSELTPAIES (281 aa). Residues 26–46 traverse the membrane as a helical segment; sequence LSVVIRAAGTVLLVPLVAALF. The Periplasmic portion of the chain corresponds to 47–52; that stretch reads GDTPQD. Residues 53–73 form a helical membrane-spanning segment; the sequence is AWPWLGWLTAATAAGWIVDTT. The Cytoplasmic portion of the chain corresponds to 74–131; sequence TSRLGFDLGFAVLDHTQHDVADRMPNIRLDWLTAENTATARAAIASTGPELVGLVVNL. The next 2 helical transmembrane spans lie at 132 to 152 and 153 to 173; these read LTPL…LVAV and SPPL…AMWA. Topologically, residues 174-241 are cytoplasmic; that stretch reads SNRLSRKADT…RLLAMQIPGQ (68 aa). Residues 242-262 form a helical membrane-spanning segment; it reads LLFSLASQLALILLAGMATWL. Residues 263 to 267 lie on the Periplasmic side of the membrane; the sequence is TVRGE. A helical transmembrane segment spans residues 268–288; it reads LSVPEAVAMIVVVARYLEPFT. Residues 289 to 576 lie on the Cytoplasmic side of the membrane; sequence SLSELTPAIE…HEAADWQITH (288 aa). The ABC transporter domain occupies 332–565; that stretch reads IEFDCVTFGY…GGRFDEFWRR (234 aa). 364 to 371 contributes to the ATP binding site; it reads GPSGSGKS.

Belongs to the ABC transporter superfamily. Siderophore-Fe(3+) uptake transporter (SIUT) (TC 3.A.1.21) family. In terms of assembly, forms a heterodimer with IrtA.

It is found in the cell inner membrane. Functionally, part of the ABC transporter complex IrtAB involved in the import of iron-bound mycobactin (Fe-MBT) and carboxymycobactin (Fe-cMBT). Has a preference for Fe-MBT over Fe-cMBT. Transmembrane domains (TMD) form a pore in the membrane and the ATP-binding domain (NBD) is responsible for energy generation. The protein is Mycobactin import ATP-binding/permease protein IrtB of Mycolicibacterium smegmatis (strain ATCC 700084 / mc(2)155) (Mycobacterium smegmatis).